We begin with the raw amino-acid sequence, 467 residues long: Probable circularly permuted 1,3-beta-glucanase TOS1 (467 aa).

The N-terminal stretch at 1–21 (MKFSSTTLLAGLSSLTATVSA) is a signal peptide. The span at 158–172 (PAVSSAAADDNANSG) shows a compositional bias: low complexity. Disordered regions lie at residues 158–187 (PAVSSAAADDNANSGSGSGSSAGSGSGYGS) and 200–223 (SDISTKSAPTSTSAQPSSSETASV). Residues 173 to 185 (SGSGSSAGSGSGY) show a composition bias toward gly residues. The span at 203–222 (STKSAPTSTSAQPSSSETAS) shows a compositional bias: low complexity. The ExDxxE motif signature appears at 374-379 (ELDLFE). Residues 391 to 413 (HLHDGQGSSQNSNNGGGGSQDYF) are disordered.

Belongs to the PGA52 family. In terms of processing, cleaved by KEX2 in vitro.

The protein localises to the secreted. It carries out the reaction Hydrolysis of (1-&gt;3)-beta-D-glucosidic linkages in (1-&gt;3)-beta-D-glucans.. Probable circularly permuted 1,3-beta-glucanase involved in cell wall modification through beta-1,3-glucan network alterations such as increased branching or remodeling. Plays a role in engulfment by host macrophages. This is Probable circularly permuted 1,3-beta-glucanase TOS1 from Candida albicans (strain SC5314 / ATCC MYA-2876) (Yeast).